The sequence spans 416 residues: Protein MID1-COMPLEMENTING ACTIVITY 2 (416 aa).

The stretch at 191–219 forms a coiled coil; that stretch reads CEALKTEEEKLQLELQRSRARYDADQCEV. The helical transmembrane segment at 338 to 354 threads the bilayer; the sequence is LIVYSLILSCCCYTCCI.

As to expression, expressed in roots, leaves, stems, flowers and siliques. In the root, high levels of expression in vascular tissues, in the stele and endodermis, but no expression in the cortex, epidermis, root cap, promeristem and adjacent elongation zone of the primary root. Not expressed in root hairs. Detected in shoot apical meristem, leaf mesophyll cells and vascular tissues, upper half of inflorescence, but not in petioles of rosette leaves.

The protein resides in the cell membrane. Inhibited by GdCl(3), but not by verapamil. Functionally, calcium-permeable stretch-activated channel component. Probably involved in mechanosensing and in mechano-stimulated calcium uptake mechanism. This is Protein MID1-COMPLEMENTING ACTIVITY 2 (MCA2) from Arabidopsis thaliana (Mouse-ear cress).